Reading from the N-terminus, the 1318-residue chain is DNA-directed RNA polymerase subunit beta' (1318 aa).

Zn(2+)-binding residues include C60, C62, C75, and C78. 3 residues coordinate Mg(2+): D535, D537, and D539. Residues C890, C967, C974, and C977 each coordinate Zn(2+).

This sequence belongs to the RNA polymerase beta' chain family. As to quaternary structure, the RNAP catalytic core consists of 2 alpha, 1 beta, 1 beta' and 1 omega subunit. When a sigma factor is associated with the core the holoenzyme is formed, which can initiate transcription. Mg(2+) serves as cofactor. The cofactor is Zn(2+).

The enzyme catalyses RNA(n) + a ribonucleoside 5'-triphosphate = RNA(n+1) + diphosphate. In terms of biological role, DNA-dependent RNA polymerase catalyzes the transcription of DNA into RNA using the four ribonucleoside triphosphates as substrates. The sequence is that of DNA-directed RNA polymerase subunit beta' from Rhodococcus jostii (strain RHA1).